We begin with the raw amino-acid sequence, 119 residues long: Large ribosomal subunit protein bL20 (119 aa).

Belongs to the bacterial ribosomal protein bL20 family.

Functionally, binds directly to 23S ribosomal RNA and is necessary for the in vitro assembly process of the 50S ribosomal subunit. It is not involved in the protein synthesizing functions of that subunit. In Nitrosomonas eutropha (strain DSM 101675 / C91 / Nm57), this protein is Large ribosomal subunit protein bL20.